The primary structure comprises 197 residues: Holliday junction branch migration complex subunit RuvA (197 aa).

The domain I stretch occupies residues 1 to 63 (MFEYLNGKLV…EDAHSLYGFV (63 aa)). The interval 64–142 (NESEKALFLR…ATGAVGISLL (79 aa)) is domain II. Residues 142–146 (LDAAP) are flexible linker. Residues 147–197 (AGNLALEEAIEALQALGYKATELKKIEKKLEQEAGLTSEEYIKSALKLMMK) are domain III.

It belongs to the RuvA family. In terms of assembly, homotetramer. Forms an RuvA(8)-RuvB(12)-Holliday junction (HJ) complex. HJ DNA is sandwiched between 2 RuvA tetramers; dsDNA enters through RuvA and exits via RuvB. An RuvB hexamer assembles on each DNA strand where it exits the tetramer. Each RuvB hexamer is contacted by two RuvA subunits (via domain III) on 2 adjacent RuvB subunits; this complex drives branch migration. In the full resolvosome a probable DNA-RuvA(4)-RuvB(12)-RuvC(2) complex forms which resolves the HJ.

It localises to the cytoplasm. Its function is as follows. The RuvA-RuvB-RuvC complex processes Holliday junction (HJ) DNA during genetic recombination and DNA repair, while the RuvA-RuvB complex plays an important role in the rescue of blocked DNA replication forks via replication fork reversal (RFR). RuvA specifically binds to HJ cruciform DNA, conferring on it an open structure. The RuvB hexamer acts as an ATP-dependent pump, pulling dsDNA into and through the RuvAB complex. HJ branch migration allows RuvC to scan DNA until it finds its consensus sequence, where it cleaves and resolves the cruciform DNA. This is Holliday junction branch migration complex subunit RuvA from Lactococcus lactis subsp. cremoris (strain SK11).